Here is a 326-residue protein sequence, read N- to C-terminus: Ribonuclease Z (326 aa).

Positions 62, 64, 66, 67, 140, 211, and 269 each coordinate Zn(2+). Asp66 serves as the catalytic Proton acceptor.

This sequence belongs to the RNase Z family. As to quaternary structure, homodimer. Zn(2+) serves as cofactor.

It catalyses the reaction Endonucleolytic cleavage of RNA, removing extra 3' nucleotides from tRNA precursor, generating 3' termini of tRNAs. A 3'-hydroxy group is left at the tRNA terminus and a 5'-phosphoryl group is left at the trailer molecule.. In terms of biological role, zinc phosphodiesterase, which displays some tRNA 3'-processing endonuclease activity. Probably involved in tRNA maturation, by removing a 3'-trailer from precursor tRNA. The chain is Ribonuclease Z from Synechocystis sp. (strain ATCC 27184 / PCC 6803 / Kazusa).